The sequence spans 104 residues: Large ribosomal subunit protein uL24 (104 aa).

It belongs to the universal ribosomal protein uL24 family. In terms of assembly, part of the 50S ribosomal subunit.

One of two assembly initiator proteins, it binds directly to the 5'-end of the 23S rRNA, where it nucleates assembly of the 50S subunit. Functionally, one of the proteins that surrounds the polypeptide exit tunnel on the outside of the subunit. This chain is Large ribosomal subunit protein uL24, found in Clostridium perfringens (strain ATCC 13124 / DSM 756 / JCM 1290 / NCIMB 6125 / NCTC 8237 / Type A).